The following is an 819-amino-acid chain: Leucine--tRNA ligase (819 aa).

Residues P42–H52 carry the 'HIGH' region motif. The 'KMSKS' region motif lies at K576–S580. K579 lines the ATP pocket.

The protein belongs to the class-I aminoacyl-tRNA synthetase family.

It is found in the cytoplasm. The enzyme catalyses tRNA(Leu) + L-leucine + ATP = L-leucyl-tRNA(Leu) + AMP + diphosphate. The polypeptide is Leucine--tRNA ligase (Nitrosococcus oceani (strain ATCC 19707 / BCRC 17464 / JCM 30415 / NCIMB 11848 / C-107)).